We begin with the raw amino-acid sequence, 208 residues long: Probable nicotinate-nucleotide adenylyltransferase (208 aa).

Belongs to the NadD family.

The catalysed reaction is nicotinate beta-D-ribonucleotide + ATP + H(+) = deamido-NAD(+) + diphosphate. It participates in cofactor biosynthesis; NAD(+) biosynthesis; deamido-NAD(+) from nicotinate D-ribonucleotide: step 1/1. In terms of biological role, catalyzes the reversible adenylation of nicotinate mononucleotide (NaMN) to nicotinic acid adenine dinucleotide (NaAD). The protein is Probable nicotinate-nucleotide adenylyltransferase of Acidothermus cellulolyticus (strain ATCC 43068 / DSM 8971 / 11B).